The chain runs to 274 residues: Large ribosomal subunit protein uL2 (274 aa).

Residues 223 to 274 are disordered; the sequence is VAMNPVDHPHGGGEGRTSGGRHPVSPWGMPTKGFKTRKNKSTDKYIVRRRNK.

This sequence belongs to the universal ribosomal protein uL2 family. Part of the 50S ribosomal subunit. Forms a bridge to the 30S subunit in the 70S ribosome.

Its function is as follows. One of the primary rRNA binding proteins. Required for association of the 30S and 50S subunits to form the 70S ribosome, for tRNA binding and peptide bond formation. It has been suggested to have peptidyltransferase activity; this is somewhat controversial. Makes several contacts with the 16S rRNA in the 70S ribosome. This Aliivibrio salmonicida (strain LFI1238) (Vibrio salmonicida (strain LFI1238)) protein is Large ribosomal subunit protein uL2.